A 1042-amino-acid polypeptide reads, in one-letter code: FHIP family protein AAEL005291 (1042 aa).

Residues 1–14 (MSWLRSSPLRQSFS) show a composition bias toward polar residues. Disordered regions lie at residues 1-31 (MSWL…GGNS), 494-514 (NNTS…PQGG), 821-866 (PHSG…KRND), and 905-977 (SNSS…GSPH). The segment covering 839–859 (VSMTSNLSQTTPMQLTPSSSY) has biased composition (polar residues). Composition is skewed to low complexity over residues 905-940 (SNSS…FMGS) and 956-976 (PSIG…TGSP).

Belongs to the FHIP family.

In Aedes aegypti (Yellowfever mosquito), this protein is FHIP family protein AAEL005291.